The following is an 837-amino-acid chain: Tuftelin-interacting protein 11 (837 aa).

Composition is skewed to basic and acidic residues over residues 1-13 (MSLS…GEGR) and 53-64 (VWAERDSDDERP). Disordered stretches follow at residues 1–21 (MSLS…DDER), 53–72 (VWAE…KRAR), and 85–133 (LKKG…KGFA). Positions 1–50 (MSLSHLYRDGEGRIDDDDDERENFEITDWDLQNEFNPNRQRHWQTKEEAT) are required for interaction with DHX15. Ser2, Ser59, and Ser98 each carry phosphoserine. The span at 91–102 (EEAELEDSDDEE) shows a compositional bias: acidic residues. Residues 103 to 116 (KPVKQDDFPKDFGP) show a composition bias toward basic and acidic residues. A Phosphoserine modification is found at Ser144. The region spanning 149–195 (TKGIGQKLLQKMGYVPGRGLGKNAQGIINPIEAKQRKGKGAVGAYGS) is the G-patch domain. Residues 179 to 236 (IEAKQRKGKGAVGAYGSERTTQSMQDFPVVDSEEEAEEEFQKELSQWRKDPSGSKKKP) are disordered. Ser210 carries the phosphoserine modification. The span at 217-231 (EFQKELSQWRKDPSG) shows a compositional bias: basic and acidic residues. The Nuclear localization signal motif lies at 700 to 705 (VKDKFN). Positions 710–734 (IMNRAVSSNVGAYMQPGARENIAYL) are required for nuclear speckle localization.

Belongs to the TFP11/STIP family. As to quaternary structure, identified in the spliceosome C complex. Found in the Intron Large (IL) complex, a post-mRNA release spliceosomal complex containing the excised intron, U2, U5 and U6 snRNPs, and splicing factors. Interacts with TUFT1. Interacts with DHX15; indicative for a recruitment of DHX15 to the IL complex. Interacts with GCFC2.

The protein localises to the cytoplasm. It localises to the nucleus. Its function is as follows. Involved in pre-mRNA splicing, specifically in spliceosome disassembly during late-stage splicing events. Intron turnover seems to proceed through reactions in two lariat-intron associated complexes termed Intron Large (IL) and Intron Small (IS). In cooperation with DHX15 seems to mediate the transition of the U2, U5 and U6 snRNP-containing IL complex to the snRNP-free IS complex leading to efficient debranching and turnover of excised introns. May play a role in the differentiation of ameloblasts and odontoblasts or in the forming of the enamel extracellular matrix. This chain is Tuftelin-interacting protein 11 (TFIP11), found in Homo sapiens (Human).